The following is a 211-amino-acid chain: Phosphoserine phosphatase 1 (211 aa).

The active-site Tele-phosphohistidine intermediate is the histidine 9. Histidine 150 is a catalytic residue.

This sequence belongs to the histidine phosphatase superfamily. Metal-independent phosphoserine phosphatase family. Homodimer. Can also form a heterodimer with PspB.

It catalyses the reaction O-phospho-L-serine + H2O = L-serine + phosphate. The catalysed reaction is O-phospho-D-serine + H2O = D-serine + phosphate. It functions in the pathway amino-acid biosynthesis; L-serine biosynthesis; L-serine from 3-phospho-D-glycerate: step 3/3. Its activity is regulated as follows. Activity is not inhibited by EDTA in vitro, nor enhanced by the addition of Mg(2+). In terms of biological role, catalyzes the dephosphorylation of L-phosphoserine to serine and inorganic phosphate. Is poorly or not active toward D-phosphoserine, DL-phosphothreonine, 3-phosphoglycerate, para-nitrophenylphosphate, and fructose-6-phosphate. Does not display phosphoglycerate mutase activity. The polypeptide is Phosphoserine phosphatase 1 (pspA) (Hydrogenobacter thermophilus (strain DSM 6534 / IAM 12695 / TK-6)).